Here is a 165-residue protein sequence, read N- to C-terminus: 2-C-methyl-D-erythritol 2,4-cyclodiphosphate synthase (165 aa).

The a divalent metal cation site is built by aspartate 13 and histidine 15. 4-CDP-2-C-methyl-D-erythritol 2-phosphate is bound by residues 13–15 (DRH) and 39–40 (HS). A divalent metal cation is bound at residue histidine 47. 4-CDP-2-C-methyl-D-erythritol 2-phosphate-binding positions include 61-63 (DIG) and phenylalanine 141.

Belongs to the IspF family. As to quaternary structure, homotrimer. The cofactor is a divalent metal cation.

The enzyme catalyses 4-CDP-2-C-methyl-D-erythritol 2-phosphate = 2-C-methyl-D-erythritol 2,4-cyclic diphosphate + CMP. Its pathway is isoprenoid biosynthesis; isopentenyl diphosphate biosynthesis via DXP pathway; isopentenyl diphosphate from 1-deoxy-D-xylulose 5-phosphate: step 4/6. Involved in the biosynthesis of isopentenyl diphosphate (IPP) and dimethylallyl diphosphate (DMAPP), two major building blocks of isoprenoid compounds. Catalyzes the conversion of 4-diphosphocytidyl-2-C-methyl-D-erythritol 2-phosphate (CDP-ME2P) to 2-C-methyl-D-erythritol 2,4-cyclodiphosphate (ME-CPP) with a corresponding release of cytidine 5-monophosphate (CMP). This Thermotoga maritima (strain ATCC 43589 / DSM 3109 / JCM 10099 / NBRC 100826 / MSB8) protein is 2-C-methyl-D-erythritol 2,4-cyclodiphosphate synthase.